The following is a 377-amino-acid chain: 23S rRNA (uracil(747)-C(5))-methyltransferase RlmC (377 aa).

[4Fe-4S] cluster-binding residues include Cys3, Cys11, Cys14, and Cys87. S-adenosyl-L-methionine-binding residues include Gln212, Phe241, Glu262, and Asn307. Cys334 acts as the Nucleophile in catalysis.

This sequence belongs to the class I-like SAM-binding methyltransferase superfamily. RNA M5U methyltransferase family. RlmC subfamily.

It catalyses the reaction uridine(747) in 23S rRNA + S-adenosyl-L-methionine = 5-methyluridine(747) in 23S rRNA + S-adenosyl-L-homocysteine + H(+). Catalyzes the formation of 5-methyl-uridine at position 747 (m5U747) in 23S rRNA. The polypeptide is 23S rRNA (uracil(747)-C(5))-methyltransferase RlmC (Photorhabdus laumondii subsp. laumondii (strain DSM 15139 / CIP 105565 / TT01) (Photorhabdus luminescens subsp. laumondii)).